Here is a 324-residue protein sequence, read N- to C-terminus: Acetyl-coenzyme A carboxylase carboxyl transferase subunit alpha (324 aa).

The region spanning 37 to 291 is the CoA carboxyltransferase C-terminal domain; it reads KLEKRLDKLK…REFIIQEWLR (255 aa).

The protein belongs to the AccA family. As to quaternary structure, acetyl-CoA carboxylase is a heterohexamer composed of biotin carboxyl carrier protein (AccB), biotin carboxylase (AccC) and two subunits each of ACCase subunit alpha (AccA) and ACCase subunit beta (AccD).

The protein resides in the cytoplasm. It carries out the reaction N(6)-carboxybiotinyl-L-lysyl-[protein] + acetyl-CoA = N(6)-biotinyl-L-lysyl-[protein] + malonyl-CoA. It functions in the pathway lipid metabolism; malonyl-CoA biosynthesis; malonyl-CoA from acetyl-CoA: step 1/1. Functionally, component of the acetyl coenzyme A carboxylase (ACC) complex. First, biotin carboxylase catalyzes the carboxylation of biotin on its carrier protein (BCCP) and then the CO(2) group is transferred by the carboxyltransferase to acetyl-CoA to form malonyl-CoA. The sequence is that of Acetyl-coenzyme A carboxylase carboxyl transferase subunit alpha from Chlamydia pneumoniae (Chlamydophila pneumoniae).